The primary structure comprises 856 residues: Translation initiation factor IF-2 (856 aa).

Residues 356-526 (PRAPVVTVMG…LLIADLLELK (171 aa)) enclose the tr-type G domain. The G1 stretch occupies residues 365–372 (GHVDHGKT). 365-372 (GHVDHGKT) contributes to the GTP binding site. Residues 390-394 (GITQH) form a G2 region. A G3 region spans residues 412 to 415 (DTPG). GTP contacts are provided by residues 412–416 (DTPGH) and 466–469 (NKID). Positions 466–469 (NKID) are G4. The tract at residues 502–504 (SAK) is G5.

The protein belongs to the TRAFAC class translation factor GTPase superfamily. Classic translation factor GTPase family. IF-2 subfamily.

Its subcellular location is the cytoplasm. In terms of biological role, one of the essential components for the initiation of protein synthesis. Protects formylmethionyl-tRNA from spontaneous hydrolysis and promotes its binding to the 30S ribosomal subunits. Also involved in the hydrolysis of GTP during the formation of the 70S ribosomal complex. This chain is Translation initiation factor IF-2, found in Ehrlichia ruminantium (strain Welgevonden).